The primary structure comprises 222 residues: Ras-related protein Rab-21 (222 aa).

An N-acetylalanine modification is found at A2. Positions 25, 28, 29, 30, 31, 42, 43, 45, 47, and 48 each coordinate GTP. A Mg(2+)-binding site is contributed by T30. The Switch 1 motif lies at 40 to 53 (KFNDKHITTLQASF). Mg(2+)-binding residues include T48 and D71. Positions 73–91 (AGQERFHALGPIYYRDSNG) match the Switch 2 motif. Residues G74, N129, K130, D132, A160, and K161 each coordinate GTP. Residues C218 and C219 are each lipidated (S-geranylgeranyl cysteine). C219 is modified (cysteine methyl ester). Positions 220–222 (SSG) are cleaved as a propeptide — removed in mature form.

The protein belongs to the small GTPase superfamily. Rab family. Interacts with the cytoplasmic tail of integrins ITGA1, ITGA2, ITGA5, ITGA6, ITGA11 and ITGB1; this interaction is dependent upon its GDP/GTP cycle. Interacts with RABGEF1 (via VPS9 domain). Interacts with ANKRD27. Interacts (in GTP-bound form) with VAMP8 in response to starvation; the interaction probably regulates VAMP8 endolysosomal trafficking. Interacts (active GTP-bound form) with TMED10; the interaction is indirect and regulates TMED10 abundance and localization at the Golgi. It depends on Mg(2+) as a cofactor.

It localises to the endoplasmic reticulum membrane. The protein localises to the golgi apparatus. The protein resides in the trans-Golgi network. Its subcellular location is the golgi apparatus membrane. It is found in the early endosome membrane. It localises to the cytoplasmic vesicle membrane. The protein localises to the cleavage furrow. The protein resides in the cell projection. Its subcellular location is the neuron projection. It carries out the reaction GTP + H2O = GDP + phosphate + H(+). Its activity is regulated as follows. Regulated by guanine nucleotide exchange factors (GEFs) including ANKRD27 and RABGEF1, which promote the exchange of bound GDP for free GTP. Regulated by GTPase activating proteins (GAPs) which increase the GTP hydrolysis activity. Inhibited by GDP dissociation inhibitors (GDIs). Its function is as follows. The small GTPases Rab are key regulators of intracellular membrane trafficking, from the formation of transport vesicles to their fusion with membranes. Rabs cycle between an inactive GDP-bound form and an active GTP-bound form that is able to recruit to membranes different sets of downstream effectors directly responsible for vesicle formation, movement, tethering and fusion. RAB21 is involved in membrane trafficking control. Regulates integrin internalization and recycling, but does not influence the traffic of endosomally translocated receptors in general. As a result, may regulate cell adhesion and migration. During the mitosis of adherent cells, controls the endosomal trafficking of integrins which is required for the successful completion of cytokinesis. Involved in neurite growth. Following SBF2/MTMT13-mediated activation in response to starvation-induced autophagy, binds to and regulates SNARE protein VAMP8 endolysosomal transport required for SNARE-mediated autophagosome-lysosome fusion. Modulates protein levels of the cargo receptors TMED2 and TMED10, and required for appropriate Golgi localization of TMED10. The chain is Ras-related protein Rab-21 (RAB21) from Bos taurus (Bovine).